The chain runs to 288 residues: MDKIIKSISKNGHFRAFALDSTLTVREAQERHQTWPTSTVALGRTLIAAQILGANEKGDTKITVKVLGDGAMGPIIAVADSKGHVKGYVKNRELDYKKASTGEVLVAPFVGNGFLVVVKDMGLKQPYSGQVDLITGEIGEDLAWYFLSSEQTPSSVGVNVLLNEDSDTVKIAGGFMLQALPDATDEEITEIEHNIKSMPSIATMLTRDEPLKTMLDNIYGDMEYKNLGEFPLAFKCDCSKERFLEGIKSLGRQPIEEMIAEDHGAEIICQFCENKYEYSEEELKALIN.

Disulfide bonds link Cys236–Cys238 and Cys269–Cys272.

This sequence belongs to the HSP33 family. Under oxidizing conditions two disulfide bonds are formed involving the reactive cysteines. Under reducing conditions zinc is bound to the reactive cysteines and the protein is inactive.

The protein resides in the cytoplasm. Redox regulated molecular chaperone. Protects both thermally unfolding and oxidatively damaged proteins from irreversible aggregation. Plays an important role in the bacterial defense system toward oxidative stress. In Lactococcus lactis subsp. cremoris (strain MG1363), this protein is 33 kDa chaperonin.